The primary structure comprises 492 residues: Probable glycine dehydrogenase (decarboxylating) subunit 2 (492 aa).

Lysine 274 carries the post-translational modification N6-(pyridoxal phosphate)lysine.

The protein belongs to the GcvP family. C-terminal subunit subfamily. As to quaternary structure, the glycine cleavage system is composed of four proteins: P, T, L and H. In this organism, the P 'protein' is a heterodimer of two subunits. It depends on pyridoxal 5'-phosphate as a cofactor.

It catalyses the reaction N(6)-[(R)-lipoyl]-L-lysyl-[glycine-cleavage complex H protein] + glycine + H(+) = N(6)-[(R)-S(8)-aminomethyldihydrolipoyl]-L-lysyl-[glycine-cleavage complex H protein] + CO2. In terms of biological role, the glycine cleavage system catalyzes the degradation of glycine. The P protein binds the alpha-amino group of glycine through its pyridoxal phosphate cofactor; CO(2) is released and the remaining methylamine moiety is then transferred to the lipoamide cofactor of the H protein. This chain is Probable glycine dehydrogenase (decarboxylating) subunit 2, found in Staphylococcus haemolyticus (strain JCSC1435).